The primary structure comprises 493 residues: Extracellular tyrosine-protein kinase PKDCC (493 aa).

The N-terminal stretch at 1 to 32 (MRRRRAAVAAGFCASFLLGSVLNVLFAPGSEP) is a signal peptide. The disordered stretch occupies residues 28 to 128 (PGSEPPRPGQ…PGPGSPGPGP (101 aa)). The segment covering 30–46 (SEPPRPGQSPEPSPAPG) has biased composition (pro residues). A compositionally biased stretch (basic and acidic residues) spans 52–69 (GRGELARQIRARYEEVQR). Composition is skewed to pro residues over residues 95 to 105 (PGLPRPRPPWA) and 114 to 127 (GWPPAPGPGSPGPG). An N-linked (GlcNAc...) asparagine glycan is attached at Asn137. In terms of domain architecture, Protein kinase spans 138-493 (VSGAQYMGSG…NKTTYVKASG (356 aa)). ATP contacts are provided by residues 144–152 (MGSGYTKAV) and Lys166. Tyr148 carries the phosphotyrosine modification. At Ser177 the chain carries Phosphoserine. The Proton acceptor role is filled by Asp278. Asn320, Asn369, Asn400, Asn460, and Asn484 each carry an N-linked (GlcNAc...) asparagine glycan.

Belongs to the protein kinase superfamily. In terms of processing, N-glycosylated. Post-translationally, phosphorylated on tyrosines; probably via autophosphorylation. As to expression, highly expressed in platelets.

It localises to the secreted. The protein localises to the golgi apparatus. The catalysed reaction is L-tyrosyl-[protein] + ATP = O-phospho-L-tyrosyl-[protein] + ADP + H(+). Secreted tyrosine-protein kinase that mediates phosphorylation of extracellular proteins and endogenous proteins in the secretory pathway, which is essential for patterning at organogenesis stages. Mediates phosphorylation of MMP1, MMP13, MMP14, MMP19 and ERP29. Probably plays a role in platelets: rapidly and quantitatively secreted from platelets in response to stimulation of platelet degranulation. May also have serine/threonine protein kinase activity. Required for longitudinal bone growth through regulation of chondrocyte differentiation. May be indirectly involved in protein transport from the Golgi apparatus to the plasma membrane. This chain is Extracellular tyrosine-protein kinase PKDCC, found in Homo sapiens (Human).